Consider the following 92-residue polypeptide: Islet amyloid polypeptide (92 aa).

A signal peptide spans 1–22 (MHISKLPAALLIFSVALNHLKA). Residues 23–34 (TPVRSGTNHQMD) constitute a propeptide that is removed on maturation. C38 and C43 form a disulfide bridge. Position 73 is a tyrosine amide (Y73). A propeptide spanning residues 77–92 (SAAEIPDGDSLDLFLL) is cleaved from the precursor.

This sequence belongs to the calcitonin family. Can form homodimers. Interacts with IDE and INS. Interaction with INS inhibits homodimerization and fibril formation.

Its subcellular location is the secreted. In terms of biological role, amylin/IAPP is a glucoregulatory peptide hormone that plays an important role in the regulation of energy homeostasis. Selectively inhibits insulin-stimulated glucose utilization and glycogen deposition in muscle, while not affecting adipocyte glucose metabolism. IAPP function is mediated by the CALCR-RAMPs (AMYRs) receptor complexes. Amylin can also bind CALCR receptor in the absence of RAMPs, although it is more selective for AMYRs. This is Islet amyloid polypeptide (IAPP) from Mesocricetus auratus (Golden hamster).